A 96-amino-acid chain; its full sequence is Co-chaperonin GroES (96 aa).

This sequence belongs to the GroES chaperonin family. As to quaternary structure, heptamer of 7 subunits arranged in a ring. Interacts with the chaperonin GroEL.

It is found in the cytoplasm. Together with the chaperonin GroEL, plays an essential role in assisting protein folding. The GroEL-GroES system forms a nano-cage that allows encapsulation of the non-native substrate proteins and provides a physical environment optimized to promote and accelerate protein folding. GroES binds to the apical surface of the GroEL ring, thereby capping the opening of the GroEL channel. The protein is Co-chaperonin GroES of Shewanella frigidimarina (strain NCIMB 400).